The following is a 355-amino-acid chain: NADH dehydrogenase [ubiquinone] 1 alpha subcomplex subunit 10, mitochondrial (355 aa).

The N-terminal 35 residues, 1-35, are a transit peptide targeting the mitochondrion; sequence MALRLLRLVPASASARGLAAGAQRVGRIHTSVHCK. The residue at position 122 (lysine 122) is an N6-acetyllysine; alternate. Lysine 122 is modified (N6-succinyllysine; alternate). Serine 250 bears the Phosphoserine; by PINK1 mark. Residue lysine 285 is modified to N6-succinyllysine.

This sequence belongs to the complex I NDUFA10 subunit family. In terms of assembly, complex I is composed of 45 different subunits. This a component of the hydrophobic protein fraction. Requires FAD as cofactor. Phosphorylation at Ser-250 by PINK1 is required for the binding and/or reduction of the complex I substrate ubiquinone. As to expression, expressed in the head and flagellum of epididymal sperm but not in testicular sperm (at protein level).

Its subcellular location is the mitochondrion matrix. Accessory subunit of the mitochondrial membrane respiratory chain NADH dehydrogenase (Complex I), that is believed not to be involved in catalysis. Complex I functions in the transfer of electrons from NADH to the respiratory chain. The immediate electron acceptor for the enzyme is believed to be ubiquinone. This chain is NADH dehydrogenase [ubiquinone] 1 alpha subcomplex subunit 10, mitochondrial (Ndufa10), found in Rattus norvegicus (Rat).